Consider the following 327-residue polypeptide: Aldo-keto reductase family 7 member A3 (327 aa).

The residue at position 2 (serine 2) is a Phosphoserine. The NADP(+) site is built by methionine 13, arginine 18, and aspartate 40. Tyrosine 45 serves as the catalytic Proton donor. Position 109 (histidine 109) interacts with citrate. NADP(+)-binding residues include asparagine 140, asparagine 194, leucine 196, glycine 198, arginine 204, and arginine 218. 2 residues coordinate citrate: tyrosine 228 and arginine 231. Positions 286, 290, 293, 294, and 327 each coordinate NADP(+).

This sequence belongs to the aldo/keto reductase family. Aldo/keto reductase 2 subfamily. In terms of assembly, homodimer. Heterodimer with AKR7A2.

The protein localises to the cytoplasm. The enzyme catalyses a primary alcohol + NADP(+) = an aldehyde + NADPH + H(+). It carries out the reaction aflatoxin B1 dialdehyde + NADPH + H(+) = aflatoxin B1 C(6a)-monoaldehyde + NADP(+). It catalyses the reaction aflatoxin B1 dialdehyde + NADPH + H(+) = aflatoxin B1 C(8)-monoaldehyde + NADP(+). The catalysed reaction is aflatoxin B1 C(6a)-monoaldehyde + NADPH + 2 H(+) = aflatoxin B1 triol + NADP(+). Its activity is regulated as follows. Inhibited by citrate. Its function is as follows. Catalyzes the NADPH-dependent reduction of various carbonyl-containing compounds, including aldehydes, ketones, and toxic products from cellular metabolism or environmental exposure. Can reduce the dialdehyde form of aflatoxin B1 (AFB1) into alcohol derivatives, via monoaldehydes intermediates, thus preventing the formation of protein adducts that contribute to AFB1-induced toxicity. This chain is Aldo-keto reductase family 7 member A3, found in Rattus norvegicus (Rat).